We begin with the raw amino-acid sequence, 486 residues long: Glutamyl-tRNA(Gln) amidotransferase subunit A (486 aa).

Residues Lys-75 and Ser-150 each act as charge relay system in the active site. Catalysis depends on Ser-174, which acts as the Acyl-ester intermediate.

Belongs to the amidase family. GatA subfamily. Heterotrimer of A, B and C subunits.

It carries out the reaction L-glutamyl-tRNA(Gln) + L-glutamine + ATP + H2O = L-glutaminyl-tRNA(Gln) + L-glutamate + ADP + phosphate + H(+). Its function is as follows. Allows the formation of correctly charged Gln-tRNA(Gln) through the transamidation of misacylated Glu-tRNA(Gln) in organisms which lack glutaminyl-tRNA synthetase. The reaction takes place in the presence of glutamine and ATP through an activated gamma-phospho-Glu-tRNA(Gln). The protein is Glutamyl-tRNA(Gln) amidotransferase subunit A of Trichormus variabilis (strain ATCC 29413 / PCC 7937) (Anabaena variabilis).